Consider the following 166-residue polypeptide: Large ribosomal subunit protein uL18c (166 aa).

Residues 1–44 constitute a chloroplast transit peptide; it reads MAAATSLSFFHSTLASSSSSSVQQLSLPPKFVNFRPQTLPLIQA.

This sequence belongs to the universal ribosomal protein uL18 family. In terms of assembly, component of the chloroplast large ribosomal subunit (LSU). Mature 70S chloroplast ribosomes of higher plants consist of a small (30S) and a large (50S) subunit. The 30S small subunit contains 1 molecule of ribosomal RNA (16S rRNA) and 24 different proteins. The 50S large subunit contains 3 rRNA molecules (23S, 5S and 4.5S rRNA) and 33 different proteins.

The protein localises to the plastid. It localises to the chloroplast. Functionally, component of the chloroplast ribosome (chloro-ribosome), a dedicated translation machinery responsible for the synthesis of chloroplast genome-encoded proteins, including proteins of the transcription and translation machinery and components of the photosynthetic apparatus. This Spinacia oleracea (Spinach) protein is Large ribosomal subunit protein uL18c (RPL18).